The primary structure comprises 439 residues: Transcriptional enhancer factor TEF-5 (439 aa).

A compositionally biased stretch (polar residues) spans 1 to 12 (MASNSWTANSSP). The interval 1–34 (MASNSWTANSSPGEAREDGSEGLDKGLDNDAEGV) is disordered. N-acetylalanine is present on A2. Basic and acidic residues predominate over residues 14–28 (EAREDGSEGLDKGLD). A DNA-binding region (TEA) is located at residues 28–104 (DNDAEGVWSP…QVLARKKVRE (77 aa)). A Phosphoserine modification is found at S148. Positions 173 to 439 (GPSQDIKPFA…QHHVYKLVKD (267 aa)) are transcriptional activation.

As to quaternary structure, interacts with YAP1 and WWTR1/TAZ. In terms of tissue distribution, expressed in embryos as well as in many adult tissues.

It localises to the nucleus. In terms of biological role, transcription factor which plays a key role in the Hippo signaling pathway, a pathway involved in organ size control and tumor suppression by restricting proliferation and promoting apoptosis. The core of this pathway is composed of a kinase cascade wherein MST1/MST2, in complex with its regulatory protein SAV1, phosphorylates and activates LATS1/2 in complex with its regulatory protein MOB1, which in turn phosphorylates and inactivates YAP1 oncoprotein and WWTR1/TAZ. Acts by mediating gene expression of YAP1 and WWTR1/TAZ, thereby regulating cell proliferation, migration and epithelial mesenchymal transition (EMT) induction. This chain is Transcriptional enhancer factor TEF-5 (Tead3), found in Mus musculus (Mouse).